A 542-amino-acid chain; its full sequence is Global nitrogen regulator NrpR (542 aa).

Residues 12-77 form a winged helix-turn-helix region; sequence IEILDILSKS…VITERGLEEL (66 aa). NRD stretches follow at residues 85 to 320 and 321 to 542; these read RLGS…KANI and RIKT…YKEI.

It belongs to the NrpR family. Homodimer.

With respect to regulation, under nitrogen limitation, binding of the intracellular nitrogen metabolite 2-oxoglutarate to NrpR decreases the binding affinity of NrpR to DNA, leading to initiation of transcription. Functionally, transcriptional repressor of nitrogen fixation and assimilation genes. Binds to two tandem operators in the glnA and nif promoters, thereby blocking transcription of the genes. In Methanocaldococcus jannaschii (strain ATCC 43067 / DSM 2661 / JAL-1 / JCM 10045 / NBRC 100440) (Methanococcus jannaschii), this protein is Global nitrogen regulator NrpR.